The following is a 147-amino-acid chain: D-aminoacyl-tRNA deacylase (147 aa).

The Gly-cisPro motif, important for rejection of L-amino acids signature appears at Gly-136–Pro-137.

This sequence belongs to the DTD family. As to quaternary structure, homodimer.

It is found in the cytoplasm. It carries out the reaction glycyl-tRNA(Ala) + H2O = tRNA(Ala) + glycine + H(+). The enzyme catalyses a D-aminoacyl-tRNA + H2O = a tRNA + a D-alpha-amino acid + H(+). Functionally, an aminoacyl-tRNA editing enzyme that deacylates mischarged D-aminoacyl-tRNAs. Also deacylates mischarged glycyl-tRNA(Ala), protecting cells against glycine mischarging by AlaRS. Acts via tRNA-based rather than protein-based catalysis; rejects L-amino acids rather than detecting D-amino acids in the active site. By recycling D-aminoacyl-tRNA to D-amino acids and free tRNA molecules, this enzyme counteracts the toxicity associated with the formation of D-aminoacyl-tRNA entities in vivo and helps enforce protein L-homochirality. This is D-aminoacyl-tRNA deacylase from Streptococcus equi subsp. zooepidemicus (strain MGCS10565).